The sequence spans 273 residues: Dermonecrotic toxin LhSicTox-alphaIA1i (273 aa).

Histidine 5 is a catalytic residue. The Mg(2+) site is built by glutamate 25 and aspartate 27. Histidine 41 serves as the catalytic Nucleophile. Disulfide bonds link cysteine 45/cysteine 51 and cysteine 47/cysteine 190. Aspartate 85 contacts Mg(2+).

Belongs to the arthropod phospholipase D family. Class II subfamily. Requires Mg(2+) as cofactor. In terms of tissue distribution, expressed by the venom gland.

It localises to the secreted. The enzyme catalyses an N-(acyl)-sphingosylphosphocholine = an N-(acyl)-sphingosyl-1,3-cyclic phosphate + choline. It catalyses the reaction an N-(acyl)-sphingosylphosphoethanolamine = an N-(acyl)-sphingosyl-1,3-cyclic phosphate + ethanolamine. The catalysed reaction is a 1-acyl-sn-glycero-3-phosphocholine = a 1-acyl-sn-glycero-2,3-cyclic phosphate + choline. It carries out the reaction a 1-acyl-sn-glycero-3-phosphoethanolamine = a 1-acyl-sn-glycero-2,3-cyclic phosphate + ethanolamine. Its function is as follows. Dermonecrotic toxins cleave the phosphodiester linkage between the phosphate and headgroup of certain phospholipids (sphingolipid and lysolipid substrates), forming an alcohol (often choline) and a cyclic phosphate. This toxin acts on sphingomyelin (SM). It may also act on ceramide phosphoethanolamine (CPE), lysophosphatidylcholine (LPC) and lysophosphatidylethanolamine (LPE), but not on lysophosphatidylserine (LPS), and lysophosphatidylglycerol (LPG). It acts by transphosphatidylation, releasing exclusively cyclic phosphate products as second products. Induces dermonecrosis, hemolysis, increased vascular permeability, edema, inflammatory response, and platelet aggregation. The polypeptide is Dermonecrotic toxin LhSicTox-alphaIA1i (Loxosceles hirsuta (Recluse spider)).